The primary structure comprises 544 residues: Epidermal growth factor-like protein 6 (544 aa).

Residues Met-1 to Ser-30 form the signal peptide. The EGF-like 1 domain maps to Arg-63–Asn-98. 6 cysteine pairs are disulfide-bonded: Cys-67-Cys-80, Cys-71-Cys-86, Cys-88-Cys-97, Cys-104-Cys-115, Cys-111-Cys-124, and Cys-126-Cys-138. The EGF-like 2; calcium-binding domain maps to Asp-100 to Ser-139. Residues Cys-144–Cys-178 enclose the EGF-like 3 domain. One can recognise an EGF-like 4; calcium-binding domain in the interval Asp-180 to Asn-218. Disulfide bonds link Cys-184–Cys-197, Cys-191–Cys-206, Cys-229–Cys-242, Cys-236–Cys-251, and Cys-253–Cys-264. Residues Asp-225–Ser-265 form the EGF-like 5; calcium-binding domain. A disordered region spans residues Gly-332–Asn-357. The stretch at Asn-333–Gly-367 forms a coiled coil. Acidic residues predominate over residues Asp-334 to Asn-357. The MAM domain maps to Val-399–Asp-543.

The protein belongs to the nephronectin family.

The protein localises to the secreted. The protein resides in the extracellular space. Its subcellular location is the extracellular matrix. It is found in the basement membrane. May play a role in organ morphogenesis. Promotes matrix assembly. This is Epidermal growth factor-like protein 6 (egfl6) from Xenopus laevis (African clawed frog).